The following is a 228-amino-acid chain: Peroxiredoxin-like 2C (228 aa).

The tract at residues 1-22 (MAAPSEAPVTRQVSGHAAPAPV) is disordered. The span at 13–22 (VSGHAAPAPV) shows a compositional bias: low complexity.

Belongs to the peroxiredoxin-like PRXL2 family. PRXL2C subfamily.

Its function is as follows. May positively regulate ERK1/2 signaling and AKT1 activation leading to HIF1A up-regulation with an increased expression of glycolysis genes and enhanced glycolysis. The protein is Peroxiredoxin-like 2C (PRXL2C) of Bos taurus (Bovine).